The sequence spans 145 residues: Deoxyuridine 5'-triphosphate nucleotidohydrolase (145 aa).

Substrate-binding positions include 64 to 66 (RSG), Asn77, 81 to 83 (TID), and Met91.

It belongs to the dUTPase family. Mg(2+) serves as cofactor.

The catalysed reaction is dUTP + H2O = dUMP + diphosphate + H(+). It functions in the pathway pyrimidine metabolism; dUMP biosynthesis; dUMP from dCTP (dUTP route): step 2/2. Its function is as follows. This enzyme is involved in nucleotide metabolism: it produces dUMP, the immediate precursor of thymidine nucleotides and it decreases the intracellular concentration of dUTP so that uracil cannot be incorporated into DNA. This is Deoxyuridine 5'-triphosphate nucleotidohydrolase from Leptospira borgpetersenii serovar Hardjo-bovis (strain JB197).